A 451-amino-acid polypeptide reads, in one-letter code: 3-carboxy-cis,cis-muconate cycloisomerase (451 aa).

Belongs to the class-II fumarase/aspartase family. In terms of assembly, homotetramer.

It catalyses the reaction 2-(carboxymethyl)-5-oxo-2,5-dihydro-2-furoate = 3-carboxy-cis,cis-muconate + H(+). It participates in aromatic compound metabolism; beta-ketoadipate pathway; 5-oxo-4,5-dihydro-2-furylacetate from 3-carboxy-cis,cis-muconate: step 1/2. Functionally, catalyzes an anti cycloisomerization. The chain is 3-carboxy-cis,cis-muconate cycloisomerase (pcaB) from Acinetobacter baylyi (strain ATCC 33305 / BD413 / ADP1).